The primary structure comprises 105 residues: Multidrug resistance protein EbrA (105 aa).

4 helical membrane-spanning segments follow: residues 2-22 (LVGY…AAML), 35-55 (ALVV…LNHI), 57-77 (LSLS…VIGV), and 84-104 (LNAK…LLNW).

It belongs to the drug/metabolite transporter (DMT) superfamily. Small multidrug resistance (SMR) (TC 2.A.7.1) family. EbrA/EbrB subfamily. As to quaternary structure, the efflux pump is composed of EbrA and EbrB.

It is found in the cell membrane. Its function is as follows. Part of a multidrug efflux pump. Confers resistance to cationic lipophilic dyes such as ethidium bromide, acriflavine, pyronine Y and safranin O. The efflux is probably coupled to an influx of protons. This Bacillus atrophaeus protein is Multidrug resistance protein EbrA (ebrA).